Here is a 331-residue protein sequence, read N- to C-terminus: Terpene synthase 8 (331 aa).

The DDxx(x)D/E motif signature appears at 97–102 (DDFYLE). Residues 228-236 (NDIYSFNKE) carry the NDxxSxxxD/E motif motif.

Belongs to the terpene synthase family.

Its function is as follows. Terpene synthase that converts its substrate farnesyl diphosphate (FPP) into several yet unidentified sesquiterpenes. The polypeptide is Terpene synthase 8 (Dictyostelium purpureum (Slime mold)).